A 460-amino-acid chain; its full sequence is Inactive 7-epi-sesquithujene synthase (460 aa).

Positions 308 and 312 each coordinate Mg(2+). Substrate contacts are provided by Asp-308 and Asp-312. The short motif at 308-312 (DDMFD) is the DDXXD motif element.

This sequence belongs to the terpene synthase family. In terms of assembly, monomer. Requires Mg(2+) as cofactor. The cofactor is Mn(2+).

The protein resides in the cytoplasm. It participates in secondary metabolite biosynthesis; terpenoid biosynthesis. In terms of biological role, non-functional sesquiterpene synthase due to a frameshift removing part of the catalytic site. This is Inactive 7-epi-sesquithujene synthase from Zea mays (Maize).